The following is a 504-amino-acid chain: Galactokinase (504 aa).

Alpha-D-galactose is bound by residues Arg47, Asp53, His54, and Asp56. Residues Gly150, Gly152, Ser154, and Ser155 each coordinate ATP. Asn196 and Asp200 together coordinate alpha-D-galactose. Asp200 functions as the Proton acceptor in the catalytic mechanism. ATP-binding residues include Ser244, Asn245, and Lys246. Position 254 (Tyr254) interacts with alpha-D-galactose.

It belongs to the GHMP kinase family. GalK subfamily.

The enzyme catalyses alpha-D-galactose + ATP = alpha-D-galactose 1-phosphate + ADP + H(+). It participates in carbohydrate metabolism; galactose metabolism. Functionally, galactokinase is a key enzyme in the galactose metabolism where it catalyzes the conversion of alpha-D-galactose to galactose 1-phosphate. Can also induce the transcription of the gal genes in response to the organism being challenged with galactose as the sole source of carbon. This chain is Galactokinase, found in Candida parapsilosis (Yeast).